The chain runs to 379 residues: Cobalt-precorrin-5B C(1)-methyltransferase (379 aa).

Belongs to the CbiD family.

It catalyses the reaction Co-precorrin-5B + S-adenosyl-L-methionine = Co-precorrin-6A + S-adenosyl-L-homocysteine. Its pathway is cofactor biosynthesis; adenosylcobalamin biosynthesis; cob(II)yrinate a,c-diamide from sirohydrochlorin (anaerobic route): step 6/10. Catalyzes the methylation of C-1 in cobalt-precorrin-5B to form cobalt-precorrin-6A. This chain is Cobalt-precorrin-5B C(1)-methyltransferase, found in Salmonella choleraesuis (strain SC-B67).